The chain runs to 197 residues: RNA pyrophosphohydrolase (197 aa).

Residues 6–154 (GYRPNVGIVL…KREVYQLALS (149 aa)) form the Nudix hydrolase domain. The Nudix box signature appears at 38–59 (GGIQHGESPEQAMYRELHEEVG).

It belongs to the Nudix hydrolase family. RppH subfamily. The cofactor is a divalent metal cation.

Accelerates the degradation of transcripts by removing pyrophosphate from the 5'-end of triphosphorylated RNA, leading to a more labile monophosphorylated state that can stimulate subsequent ribonuclease cleavage. The protein is RNA pyrophosphohydrolase of Polynucleobacter necessarius subsp. necessarius (strain STIR1).